The primary structure comprises 397 residues: Lymphoid enhancer-binding factor 1 (397 aa).

A CTNNB1-binding region spans residues 1 to 60 (MPQLSGGGGGGDPELCATDEMIPFKDEGDPQKEKIFAEISHPEEEGDLADIKSSLVNESE). Lysine 25 participates in a covalent cross-link: Glycyl lysine isopeptide (Lys-Gly) (interchain with G-Cter in SUMO). The disordered stretch occupies residues 38 to 102 (EISHPEEEGD…KHPDGGLYNK (65 aa)). Residues 80–96 (PYHDKAREHPDDGKHPD) show a composition bias toward basic and acidic residues. Serine 130 carries the post-translational modification Phosphoserine. Threonine 153 bears the Phosphothreonine; by NLK mark. Serine 164 bears the Phosphoserine; by NLK mark. 2 disordered regions span residues 164-190 (SPGS…PAPE) and 266-296 (VKQE…KRPH). Lysine 267 is covalently cross-linked (Glycyl lysine isopeptide (Lys-Gly) (interchain with G-Cter in SUMO)). The span at 267–294 (KQEHPHTDSDLMHVKPEHEQRKEQEPKR) shows a compositional bias: basic and acidic residues. Residues 297–365 (IKKPLNAFML…LHMQLYPGWS (69 aa)) constitute a DNA-binding region (HMG box). Residues 367–397 (RDNYGKKKKRKREKLQESTSGTGPRMTAAYI) form a disordered region.

It belongs to the TCF/LEF family. In terms of assembly, binds the armadillo repeat of CTNNB1 and forms a stable complex. Interacts with TLE1, PIASG, ALYREF/THOC4, EP300, MDFI and MDFIC. Interacts with DAZAP2. In terms of processing, phosphorylated at Thr-153 and/or Ser-164 by NLK. Phosphorylation by NLK at these sites represses LEF1-mediated transcriptional activation of target genes of the canonical Wnt signaling pathway.

It is found in the nucleus. In terms of biological role, transcription factor that binds DNA in a sequence-specific manner. Participates in the Wnt signaling pathway. Activates transcription of target genes in the presence of CTNNB1 and EP300. PIASG antagonizes both Wnt-dependent and Wnt-independent activation by LEF1. TLE1, TLE2, TLE3 and TLE4 repress transactivation mediated by LEF1 and CTNNB1. Regulates T-cell receptor alpha enhancer function. Required for IL17A expressing gamma-delta T-cell maturation and development, via binding to regulator loci of BLK to modulate expression. Acts as a positive regulator of odontoblast differentiation during mesenchymal tooth germ formation, expression is repressed during the bell stage by MSX1-mediated inhibition of CTNNB1 signaling. May play a role in hair cell differentiation and follicle morphogenesis. This chain is Lymphoid enhancer-binding factor 1, found in Rattus norvegicus (Rat).